Consider the following 101-residue polypeptide: Protein Tat (101 aa).

The interval 1–20 is disordered; that stretch reads MEPVDPNLEPWKHPGSQPTT. The segment at 1-24 is interaction with human CREBBP; the sequence is MEPVDPNLEPWKHPGSQPTTACSN. A transactivation region spans residues 1–48; sequence MEPVDPNLEPWKHPGSQPTTACSNCYCKVCCWHCQLCFLKKGLGISYG. The Zn(2+) site is built by Cys-22, Cys-25, and Cys-27. Positions 22 to 37 are cysteine-rich; that stretch reads CSNCYCKVCCWHCQLC. An N6-acetyllysine; by host PCAF modification is found at Lys-28. The Zn(2+) site is built by Cys-30, His-33, Cys-34, and Cys-37. The interval 38-48 is core; it reads FLKKGLGISYG. Residues 48-101 are disordered; sequence GKKKRKPRRGPPQGSKDHQTLIPKQPLPQSQRVSAGQEESKKKVESKAKTDRFA. Positions 49–57 match the Nuclear localization signal, RNA-binding (TAR), and protein transduction motif; the sequence is KKKRKPRRG. The interaction with the host capping enzyme RNGTT stretch occupies residues 49-86; that stretch reads KKKRKPRRGPPQGSKDHQTLIPKQPLPQSQRVSAGQEE. N6-acetyllysine; by host EP300 and GCN5L2 occurs at positions 50 and 51. Arg-52 is modified (asymmetric dimethylarginine; by host PRMT6). Lys-71 participates in a covalent cross-link: Glycyl lysine isopeptide (Lys-Gly) (interchain with G-Cter in ubiquitin). Basic and acidic residues predominate over residues 85–101; the sequence is EESKKKVESKAKTDRFA.

It belongs to the lentiviruses Tat family. Interacts with host CCNT1. Associates with the P-TEFb complex composed at least of Tat, P-TEFb (CDK9 and CCNT1), TAR RNA, RNA Pol II. Recruits the HATs CREBBP, TAF1/TFIID, EP300, PCAF and GCN5L2. Interacts with host KAT5/Tip60; this interaction targets the latter to degradation. Interacts with the host deacetylase SIRT1. Interacts with host capping enzyme RNGTT; this interaction stimulates RNGTT. Binds to host KDR, and to the host integrins ITGAV/ITGB3 and ITGA5/ITGB1. Interacts with host KPNB1/importin beta-1 without previous binding to KPNA1/importin alpha-1. Interacts with EIF2AK2. Interacts with host nucleosome assembly protein NAP1L1; this interaction may be required for the transport of Tat within the nucleus, since the two proteins interact at the nuclear rim. Interacts with host C1QBP/SF2P32; this interaction involves lysine-acetylated Tat. Interacts with the host chemokine receptors CCR2, CCR3 and CXCR4. Interacts with host DPP4/CD26; this interaction may trigger an anti-proliferative effect. Interacts with host LDLR. Interacts with the host extracellular matrix metalloproteinase MMP1. Interacts with host PRMT6; this interaction mediates Tat's methylation. Interacts with, and is ubiquitinated by MDM2/Hdm2. Interacts with host PSMC3 and HTATIP2. Interacts with STAB1; this interaction may overcome SATB1-mediated repression of IL2 and IL2RA (interleukin) in T cells by binding to the same domain than HDAC1. Interacts (when acetylated) with human CDK13, thereby increasing HIV-1 mRNA splicing and promoting the production of the doubly spliced HIV-1 protein Nef. Interacts with host TBP; this interaction modulates the activity of transcriptional pre-initiation complex. Interacts with host RELA. Interacts with host PLSCR1; this interaction negatively regulates Tat transactivation activity by altering its subcellular distribution. In terms of processing, asymmetrical arginine methylation by host PRMT6 seems to diminish the transactivation capacity of Tat and affects the interaction with host CCNT1. Post-translationally, acetylation by EP300, CREBBP, GCN5L2/GCN5 and PCAF regulates the transactivation activity of Tat. EP300-mediated acetylation of Lys-50 promotes dissociation of Tat from the TAR RNA through the competitive binding to PCAF's bromodomain. In addition, the non-acetylated Tat's N-terminus can also interact with PCAF. PCAF-mediated acetylation of Lys-28 enhances Tat's binding to CCNT1. Lys-50 is deacetylated by SIRT1. Polyubiquitination by host MDM2 does not target Tat to degradation, but activates its transactivation function and fosters interaction with CCNT1 and TAR RNA. In terms of processing, phosphorylated by EIF2AK2 on serine and threonine residues adjacent to the basic region important for TAR RNA binding and function. Phosphorylation of Tat by EIF2AK2 is dependent on the prior activation of EIF2AK2 by dsRNA.

It is found in the host nucleus. Its subcellular location is the host nucleolus. It localises to the host cytoplasm. The protein localises to the secreted. Transcriptional activator that increases RNA Pol II processivity, thereby increasing the level of full-length viral transcripts. Recognizes a hairpin structure at the 5'-LTR of the nascent viral mRNAs referred to as the transactivation responsive RNA element (TAR) and recruits the cyclin T1-CDK9 complex (P-TEFb complex) that will in turn hyperphosphorylate the RNA polymerase II to allow efficient elongation. The CDK9 component of P-TEFb and other Tat-activated kinases hyperphosphorylate the C-terminus of RNA Pol II that becomes stabilized and much more processive. Other factors such as HTATSF1/Tat-SF1, SUPT5H/SPT5, and HTATIP2 are also important for Tat's function. Besides its effect on RNA Pol II processivity, Tat induces chromatin remodeling of proviral genes by recruiting the histone acetyltransferases (HATs) CREBBP, EP300 and PCAF to the chromatin. This also contributes to the increase in proviral transcription rate, especially when the provirus integrates in transcriptionally silent region of the host genome. To ensure maximal activation of the LTR, Tat mediates nuclear translocation of NF-kappa-B by interacting with host RELA. Through its interaction with host TBP, Tat may also modulate transcription initiation. Tat can reactivate a latently infected cell by penetrating in it and transactivating its LTR promoter. In the cytoplasm, Tat is thought to act as a translational activator of HIV-1 mRNAs. In terms of biological role, extracellular circulating Tat can be endocytosed by surrounding uninfected cells via the binding to several surface receptors such as CD26, CXCR4, heparan sulfate proteoglycans (HSPG) or LDLR. Neurons are rarely infected, but they internalize Tat via their LDLR. Through its interaction with nuclear HATs, Tat is potentially able to control the acetylation-dependent cellular gene expression. Modulates the expression of many cellular genes involved in cell survival, proliferation or in coding for cytokines or cytokine receptors. Tat plays a role in T-cell and neurons apoptosis. Tat induced neurotoxicity and apoptosis probably contribute to neuroAIDS. Circulating Tat also acts as a chemokine-like and/or growth factor-like molecule that binds to specific receptors on the surface of the cells, affecting many cellular pathways. In the vascular system, Tat binds to ITGAV/ITGB3 and ITGA5/ITGB1 integrins dimers at the surface of endothelial cells and competes with bFGF for heparin-binding sites, leading to an excess of soluble bFGF. The polypeptide is Protein Tat (Human immunodeficiency virus type 1 group M subtype A (isolate U455) (HIV-1)).